Reading from the N-terminus, the 176-residue chain is Variant surface antigen A (176 aa).

An N-terminal signal peptide occupies residues 1 to 29; it reads MKKSIFSKKLLVSFGSLVALAAIPLIAIS. Cys-30 carries the N-palmitoyl cysteine lipid modification. Cys-30 is lipidated: S-diacylglycerol cysteine. A disordered region spans residues 33 to 176; sequence TDNNSSQSQQ…TKTENTQHTS (144 aa). Residues 35–121 show a composition bias toward low complexity; the sequence is NNSSQSQQPG…GSNSESGMNS (87 aa). Copy 1 of the repeat occupies 123–135; the sequence is KTENTQQSEAPGT. Residues 123–176 are 2.5 X 13 AA repeats; sequence KTENTQQSEAPGTNTGNKTTSESNSESGMNSEKTENTQQSEAPGTKTENTQHTS. The segment covering 126–142 has biased composition (polar residues); that stretch reads NTQQSEAPGTNTGNKTT. Positions 143–153 are enriched in low complexity; the sequence is SESNSESGMNS. Repeat unit 2 spans residues 155 to 167; it reads KTENTQQSEAPGT. The span at 158-176 shows a compositional bias: polar residues; it reads NTQQSEAPGTKTENTQHTS. Residues 168–176 form a 3; truncated repeat; that stretch reads KTENTQHTS.

It is found in the cell membrane. Its function is as follows. Responsible for the antigenic diversity for host adaptation. The chain is Variant surface antigen A (vlpA) from Mesomycoplasma hyorhinis (Mycoplasma hyorhinis).